Consider the following 473-residue polypeptide: GTPase Der (473 aa).

EngA-type G domains follow at residues 3–167 (FTVA…GKDR) and 203–378 (LRVA…RVWN). GTP is bound by residues 9 to 16 (GRPNVGKS), 56 to 60 (DTAGL), 119 to 122 (NKSE), 209 to 216 (GRPNAGKS), 256 to 260 (DTAGM), and 321 to 324 (NKWD). One can recognise a KH-like domain in the interval 379–463 (KRISTAKLNR…PIRIHFRSAE (85 aa)).

It belongs to the TRAFAC class TrmE-Era-EngA-EngB-Septin-like GTPase superfamily. EngA (Der) GTPase family. In terms of assembly, associates with the 50S ribosomal subunit.

Its function is as follows. GTPase that plays an essential role in the late steps of ribosome biogenesis. This Rhizobium leguminosarum bv. trifolii (strain WSM2304) protein is GTPase Der.